Reading from the N-terminus, the 136-residue chain is Lipoprotein YghG (136 aa).

Residues 1–24 (MSIKQMPGRVLISLLLSVTGLLSG) form the signal peptide. C25 carries N-palmitoyl cysteine lipidation. C25 is lipidated: S-diacylglycerol cysteine.

It belongs to the GspS/AspS pilotin family.

Its subcellular location is the cell outer membrane. Involved in a type II secretion system (T2SS, formerly general secretion pathway, GSP) for the export of folded proteins across the outer membrane. In a functional T2SS this subunit helps assemble the outer membrane channel. The chain is Lipoprotein YghG (yghG) from Escherichia coli (strain K12).